Reading from the N-terminus, the 290-residue chain is Small ribosomal subunit biogenesis GTPase RsgA (290 aa).

Residues Ser-61–Leu-218 enclose the CP-type G domain. Residues Asn-110–Asp-113 and Gly-161–Thr-169 contribute to the GTP site. Zn(2+) contacts are provided by Cys-243, Cys-248, His-250, and Cys-256.

This sequence belongs to the TRAFAC class YlqF/YawG GTPase family. RsgA subfamily. In terms of assembly, monomer. Associates with 30S ribosomal subunit, binds 16S rRNA. It depends on Zn(2+) as a cofactor.

It localises to the cytoplasm. One of several proteins that assist in the late maturation steps of the functional core of the 30S ribosomal subunit. Helps release RbfA from mature subunits. May play a role in the assembly of ribosomal proteins into the subunit. Circularly permuted GTPase that catalyzes slow GTP hydrolysis, GTPase activity is stimulated by the 30S ribosomal subunit. This is Small ribosomal subunit biogenesis GTPase RsgA from Clostridium botulinum (strain Eklund 17B / Type B).